The sequence spans 225 residues: Phosphatidylserine decarboxylase proenzyme (225 aa).

The active-site Schiff-base intermediate with substrate; via pyruvic acid is Ser-188. Ser-188 is subject to Pyruvic acid (Ser); by autocatalysis.

The protein belongs to the phosphatidylserine decarboxylase family. PSD-A subfamily. As to quaternary structure, heterodimer of a large membrane-associated beta subunit and a small pyruvoyl-containing alpha subunit. Requires pyruvate as cofactor. Is synthesized initially as an inactive proenzyme. Formation of the active enzyme involves a self-maturation process in which the active site pyruvoyl group is generated from an internal serine residue via an autocatalytic post-translational modification. Two non-identical subunits are generated from the proenzyme in this reaction, and the pyruvate is formed at the N-terminus of the alpha chain, which is derived from the carboxyl end of the proenzyme. The post-translation cleavage follows an unusual pathway, termed non-hydrolytic serinolysis, in which the side chain hydroxyl group of the serine supplies its oxygen atom to form the C-terminus of the beta chain, while the remainder of the serine residue undergoes an oxidative deamination to produce ammonia and the pyruvoyl prosthetic group on the alpha chain.

The protein resides in the cell membrane. It catalyses the reaction a 1,2-diacyl-sn-glycero-3-phospho-L-serine + H(+) = a 1,2-diacyl-sn-glycero-3-phosphoethanolamine + CO2. Its pathway is phospholipid metabolism; phosphatidylethanolamine biosynthesis; phosphatidylethanolamine from CDP-diacylglycerol: step 2/2. Functionally, catalyzes the formation of phosphatidylethanolamine (PtdEtn) from phosphatidylserine (PtdSer). This is Phosphatidylserine decarboxylase proenzyme from Parvibaculum lavamentivorans (strain DS-1 / DSM 13023 / NCIMB 13966).